The chain runs to 150 residues: Histone H3-like centromeric protein A (150 aa).

The interval 1-56 is disordered; the sequence is MRPGSTPASRRKSRPPRRVSPPLPTTSTRSPGRPSAPEQRKAPRATPKKRFRPGTR. The segment covering 25 to 37 has biased composition (low complexity); the sequence is TTSTRSPGRPSAP. A compositionally biased stretch (basic residues) spans 42-53; sequence APRATPKKRFRP. Residues 53 to 150 form an H3-like region; that stretch reads PGTRALMEIR…RIRGVTEGLG (98 aa).

This sequence belongs to the histone H3 family. Component of centromeric nucleosomes, where DNA is wrapped around a histone octamer core. The octamer contains two molecules each of H2A, H2B, CENPA and H4 assembled in one CENPA-H4 heterotetramer and two H2A-H2B heterodimers. CENPA modulates the DNA-binding characteristics of nucleosomes so that protruding DNA ends have higher flexibility than in nucleosomes containing conventional histone H3.

The protein localises to the nucleus. It is found in the chromosome. It localises to the centromere. Its function is as follows. Histone H3-like nucleosomal protein that is specifically found in centromeric nucleosomes. Replaces conventional H3 in the nucleosome core of centromeric chromatin that serves as an assembly site for the inner kinetochore. The presence of CENPA subtly modifies the nucleosome structure and the way DNA is wrapped around the nucleosome and gives rise to protruding DNA ends that are less well-ordered and rigid compared to nucleosomes containing histone H3. May serve as an epigenetic mark that propagates centromere identity through replication and cell division. Required for recruitment and assembly of kinetochore proteins, and as a consequence required for progress through mitosis, chromosome segregation and cytokinesis. In Xenopus tropicalis (Western clawed frog), this protein is Histone H3-like centromeric protein A (cenpa).